The following is a 407-amino-acid chain: Serine hydroxymethyltransferase (407 aa).

Residues L120 and 124-126 (GHL) contribute to the (6S)-5,6,7,8-tetrahydrofolate site. Position 229 is an N6-(pyridoxal phosphate)lysine (K229).

The protein belongs to the SHMT family. In terms of assembly, homodimer. Pyridoxal 5'-phosphate is required as a cofactor.

The protein resides in the cytoplasm. It carries out the reaction (6R)-5,10-methylene-5,6,7,8-tetrahydrofolate + glycine + H2O = (6S)-5,6,7,8-tetrahydrofolate + L-serine. It functions in the pathway one-carbon metabolism; tetrahydrofolate interconversion. It participates in amino-acid biosynthesis; glycine biosynthesis; glycine from L-serine: step 1/1. Its function is as follows. Catalyzes the reversible interconversion of serine and glycine with tetrahydrofolate (THF) serving as the one-carbon carrier. This reaction serves as the major source of one-carbon groups required for the biosynthesis of purines, thymidylate, methionine, and other important biomolecules. Also exhibits THF-independent aldolase activity toward beta-hydroxyamino acids, producing glycine and aldehydes, via a retro-aldol mechanism. This Deinococcus deserti (strain DSM 17065 / CIP 109153 / LMG 22923 / VCD115) protein is Serine hydroxymethyltransferase.